The primary structure comprises 262 residues: Adenosine deaminase RL5 (262 aa).

12 residues coordinate Cu cation: N36, Y40, M68, H73, C75, N114, C118, H135, C172, C175, C234, and C237.

This sequence belongs to the purine nucleoside phosphorylase YfiH/LACC1 family. As to quaternary structure, homodimer. Requires Cu cation as cofactor.

The enzyme catalyses adenosine + phosphate = alpha-D-ribose 1-phosphate + adenine. The catalysed reaction is S-methyl-5'-thioadenosine + phosphate = 5-(methylsulfanyl)-alpha-D-ribose 1-phosphate + adenine. It carries out the reaction inosine + phosphate = alpha-D-ribose 1-phosphate + hypoxanthine. It catalyses the reaction adenosine + H2O + H(+) = inosine + NH4(+). Functionally, purine nucleoside enzyme that catalyzes the phosphorolysis of adenosine and inosine nucleosides, yielding D-ribose 1-phosphate and the respective free bases, adenine and hypoxanthine. Also catalyzes the phosphorolysis of S-methyl-5'-thioadenosine into adenine and S-methyl-5-thio-alpha-D-ribose 1-phosphate. Also has adenosine deaminase activity. Also acts as a multicopper oxidase able to oxidize a wide variety of polyphenols and related compounds in vitro. Displays substrate preference as follows: syringaldazine &gt; 2,6-dimethoxyphenol &gt; veratryl alcohol &gt; guaiacol &gt; tetramethylbenzidine &gt; 4-methoxybenzyl alcohol &gt; 2,2'-azino-bis(3-ethylbenzthiazoline-6-sulfonic acid) (ABTS) &gt;&gt; phenol red &gt; 1-hydroxybenzotriazole. Cannot use 3,4-dimetoxybenzyl alcohol and violuric acid as substrates. As this enzyme is derived from a rumen microbial community, it may have a role in the digestion of complex plant materials such as ryegrass lignin. This chain is Adenosine deaminase RL5, found in Unknown prokaryotic organism.